The sequence spans 418 residues: ML-236A carboxylate methylbutanoyltransferase mlcH (418 aa).

Monacolin J is bound at residue R78. S81 serves as the catalytic Acyl-ester intermediate. Monacolin J contacts are provided by R178, Y193, and Y262. G370 contacts 2-methylbutanoate.

This sequence belongs to the class-A beta-lactamase family.

It catalyses the reaction ML-236A carboxylate + (S)-2-methylbutanoyl-[2-methylbutanoate polyketide synthase] = mevinic carboxylate + holo-[2-methylbutanoate polyketide synthase]. Its pathway is polyketide biosynthesis. In terms of biological role, compactin diketide synthase; part of the gene cluster that mediates the biosynthesis of compactin, also known as mevastatin or ML-236B, and which acts as a potent competitive inhibitor of HMG-CoA reductase. Compactin biosynthesis is performed in two stages. The first stage is catalyzed by the nonaketide synthase mlcA, which belongs to type I polyketide synthases and catalyzes the iterative nine-step formation of the polyketide. This PKS stage is completed by the action of dehydrogenase mlcG, which catalyzes the NADPH-dependent reduction of the unsaturated tetra-, penta- and heptaketide intermediates that arise during the mlcA-mediated biosynthesis of the nonaketide chain and leads to dihydro-ML-236C carboxylate. Covalently bound dihydro-ML-236C carboxylate is released from mlcA by the mlcF esterase. Conversion of dihydro-ML-236C carboxylate into ML-236A carboxylate is subsequently performed with the participation of molecular oxygen and P450 monoogygenase mlcC. Finally, mlcH performs the conversion of ML-236A carboxylate to ML-236B/compactin carboxylate through the addition of the side-chain diketide moiety produced by the diketide synthase mlcB. This is ML-236A carboxylate methylbutanoyltransferase mlcH from Penicillium citrinum.